Consider the following 181-residue polypeptide: Ribonuclease HII (181 aa).

One can recognise an RNase H type-2 domain in the interval 1-181; the sequence is MICGIDEVGR…SLHRRNFKLI (181 aa). A divalent metal cation-binding residues include Asp6, Glu7, and Asp98.

It belongs to the RNase HII family. Requires Mn(2+) as cofactor. The cofactor is Mg(2+).

The protein resides in the cytoplasm. The enzyme catalyses Endonucleolytic cleavage to 5'-phosphomonoester.. Its function is as follows. Endonuclease that specifically degrades the RNA of RNA-DNA hybrids. The protein is Ribonuclease HII of Borrelia garinii subsp. bavariensis (strain ATCC BAA-2496 / DSM 23469 / PBi) (Borreliella bavariensis).